A 345-amino-acid polypeptide reads, in one-letter code: Myb/SANT-like DNA-binding domain-containing protein 4 (345 aa).

Residues 4-77 (LKRKRKSNFS…EVKRRYLDWR (74 aa)) form the Myb-like domain. A Glycyl lysine isopeptide (Lys-Gly) (interchain with G-Cter in SUMO2) cross-link involves residue Lys-9. Ser-106 is modified (phosphoserine). Glycyl lysine isopeptide (Lys-Gly) (interchain with G-Cter in SUMO2) cross-links involve residues Lys-114 and Lys-142. The tract at residues 143–175 (VEEEERDPQSPEFEIEEEEEMLSSVIPDSRREN) is disordered. The residue at position 188 (Thr-188) is a Phosphothreonine. Residues 203 to 345 (LLVNIEKQKL…LRIQKEGHLQ (143 aa)) are a coiled coil. Glycyl lysine isopeptide (Lys-Gly) (interchain with G-Cter in SUMO2) cross-links involve residues Lys-237, Lys-254, and Lys-273.

The polypeptide is Myb/SANT-like DNA-binding domain-containing protein 4 (MSANTD4) (Homo sapiens (Human)).